Reading from the N-terminus, the 321-residue chain is Transmembrane protein 255A (321 aa).

Helical transmembrane passes span 29–49 (VFVT…GMAA), 56–76 (VTVG…LGII), 88–108 (LVAS…CAIV), and 200–220 (TILN…LGGF). Residues 279 to 297 (STPSGLSDDPNGQASSFMW) show a composition bias toward polar residues. The segment at 279-300 (STPSGLSDDPNGQASSFMWPSN) is disordered.

The protein belongs to the TMEM255 family.

The protein localises to the membrane. The chain is Transmembrane protein 255A (tmem255a) from Xenopus laevis (African clawed frog).